Here is a 295-residue protein sequence, read N- to C-terminus: Small ribosomal subunit biogenesis GTPase RsgA (295 aa).

In terms of domain architecture, CP-type G spans 65 to 223 (KNQLVRPPVA…VLDTPGFTAL (159 aa)). GTP-binding positions include 114-117 (NKVD) and 165-173 (GPSGVGKSS). Zn(2+)-binding residues include C246, C251, H253, and C259.

This sequence belongs to the TRAFAC class YlqF/YawG GTPase family. RsgA subfamily. In terms of assembly, monomer. Associates with 30S ribosomal subunit, binds 16S rRNA. It depends on Zn(2+) as a cofactor.

It localises to the cytoplasm. One of several proteins that assist in the late maturation steps of the functional core of the 30S ribosomal subunit. Helps release RbfA from mature subunits. May play a role in the assembly of ribosomal proteins into the subunit. Circularly permuted GTPase that catalyzes slow GTP hydrolysis, GTPase activity is stimulated by the 30S ribosomal subunit. The chain is Small ribosomal subunit biogenesis GTPase RsgA from Caldanaerobacter subterraneus subsp. tengcongensis (strain DSM 15242 / JCM 11007 / NBRC 100824 / MB4) (Thermoanaerobacter tengcongensis).